Reading from the N-terminus, the 302-residue chain is Oxygen-dependent coproporphyrinogen-III oxidase (302 aa).

Ser94 contributes to the substrate binding site. Positions 98 and 108 each coordinate a divalent metal cation. The active-site Proton donor is His108. Residue 110–112 (NVR) coordinates substrate. A divalent metal cation-binding residues include His147 and His177. Residues 242-277 (YVEFNLVFDRGTLFGLQSGGRTESILMSMPPVANWR) are important for dimerization. 260–262 (GGR) lines the substrate pocket.

It belongs to the aerobic coproporphyrinogen-III oxidase family. As to quaternary structure, homodimer. The cofactor is a divalent metal cation.

The protein resides in the cytoplasm. It carries out the reaction coproporphyrinogen III + O2 + 2 H(+) = protoporphyrinogen IX + 2 CO2 + 2 H2O. The protein operates within porphyrin-containing compound metabolism; protoporphyrin-IX biosynthesis; protoporphyrinogen-IX from coproporphyrinogen-III (O2 route): step 1/1. Its function is as follows. Involved in the heme biosynthesis. Catalyzes the aerobic oxidative decarboxylation of propionate groups of rings A and B of coproporphyrinogen-III to yield the vinyl groups in protoporphyrinogen-IX. This Ralstonia nicotianae (strain ATCC BAA-1114 / GMI1000) (Ralstonia solanacearum) protein is Oxygen-dependent coproporphyrinogen-III oxidase.